We begin with the raw amino-acid sequence, 249 residues long: Phosphate import ATP-binding protein PstB 2 (249 aa).

The 241-residue stretch at 4–244 (IEVRDLDLFY…PKDKRTEDYI (241 aa)) folds into the ABC transporter domain. 36-43 (GPSGCGKS) provides a ligand contact to ATP.

This sequence belongs to the ABC transporter superfamily. Phosphate importer (TC 3.A.1.7) family. In terms of assembly, the complex is composed of two ATP-binding proteins (PstB), two transmembrane proteins (PstC and PstA) and a solute-binding protein (PstS).

Its subcellular location is the cell membrane. It catalyses the reaction phosphate(out) + ATP + H2O = ADP + 2 phosphate(in) + H(+). Its function is as follows. Part of the ABC transporter complex PstSACB involved in phosphate import. Responsible for energy coupling to the transport system. The polypeptide is Phosphate import ATP-binding protein PstB 2 (Caldanaerobacter subterraneus subsp. tengcongensis (strain DSM 15242 / JCM 11007 / NBRC 100824 / MB4) (Thermoanaerobacter tengcongensis)).